The chain runs to 142 residues: Hemoglobin subunit alpha (142 aa).

Serine 1 is modified (N-acetylserine). Residues 1–142 enclose the Globin domain; the sequence is SLSDKDKAVV…LALALSEKYR (142 aa). Position 59 (histidine 59) interacts with O2. Histidine 88 contributes to the heme b binding site.

This sequence belongs to the globin family. In terms of assembly, heterotetramer of two alpha chains and two beta chains. In terms of tissue distribution, red blood cells.

Functionally, involved in oxygen transport from gills to the various peripheral tissues. This chain is Hemoglobin subunit alpha (hba), found in Carassius auratus (Goldfish).